The chain runs to 415 residues: Histidine--tRNA ligase (415 aa).

This sequence belongs to the class-II aminoacyl-tRNA synthetase family. As to quaternary structure, homodimer.

The protein resides in the cytoplasm. The enzyme catalyses tRNA(His) + L-histidine + ATP = L-histidyl-tRNA(His) + AMP + diphosphate + H(+). This Idiomarina loihiensis (strain ATCC BAA-735 / DSM 15497 / L2-TR) protein is Histidine--tRNA ligase.